The primary structure comprises 126 residues: Small ribosomal subunit protein uS12 (126 aa).

Residues 1–28 (MPTINQLVRKGRQSETTKSKSPALQDCP) are disordered. D89 bears the 3-methylthioaspartic acid mark. The segment at 103-126 (DTQGVKDRKQARSKYGAKRAKAAK) is disordered. Basic residues predominate over residues 113–126 (ARSKYGAKRAKAAK).

It belongs to the universal ribosomal protein uS12 family. Part of the 30S ribosomal subunit. Contacts proteins S8 and S17. May interact with IF1 in the 30S initiation complex.

Its function is as follows. With S4 and S5 plays an important role in translational accuracy. In terms of biological role, interacts with and stabilizes bases of the 16S rRNA that are involved in tRNA selection in the A site and with the mRNA backbone. Located at the interface of the 30S and 50S subunits, it traverses the body of the 30S subunit contacting proteins on the other side and probably holding the rRNA structure together. The combined cluster of proteins S8, S12 and S17 appears to hold together the shoulder and platform of the 30S subunit. The protein is Small ribosomal subunit protein uS12 of Burkholderia orbicola (strain MC0-3).